We begin with the raw amino-acid sequence, 312 residues long: Peptide methionine sulfoxide reductase MsrA/MsrB 1 (312 aa).

The interval 1-155 (MAEIYLAGGC…PSGYCHIDVT (155 aa)) is peptide methionine sulfoxide reductase. The active site involves cysteine 10. In terms of domain architecture, MsrB spans 172–295 (QEVLKASLSE…NSASLRFVAK (124 aa)). Cysteine 284 functions as the Nucleophile in the catalytic mechanism.

It in the N-terminal section; belongs to the MsrA Met sulfoxide reductase family. The protein in the C-terminal section; belongs to the MsrB Met sulfoxide reductase family.

It localises to the cell membrane. The catalysed reaction is L-methionyl-[protein] + [thioredoxin]-disulfide + H2O = L-methionyl-(S)-S-oxide-[protein] + [thioredoxin]-dithiol. The enzyme catalyses [thioredoxin]-disulfide + L-methionine + H2O = L-methionine (S)-S-oxide + [thioredoxin]-dithiol. It carries out the reaction L-methionyl-[protein] + [thioredoxin]-disulfide + H2O = L-methionyl-(R)-S-oxide-[protein] + [thioredoxin]-dithiol. Has an important function as a repair enzyme for proteins that have been inactivated by oxidation. Catalyzes the reversible oxidation-reduction of methionine sulfoxide in proteins to methionine. This chain is Peptide methionine sulfoxide reductase MsrA/MsrB 1 (msrAB1), found in Streptococcus pneumoniae serotype 4 (strain ATCC BAA-334 / TIGR4).